The chain runs to 163 residues: Globin CTT-Z (163 aa).

The N-terminal stretch at 1 to 16 (MKFFAVLALCIVGAIA) is a signal peptide. A Globin domain is found at 18–162 (PLTSDEAALV…VYTAVFQIVT (145 aa)). H76 and H111 together coordinate heme b.

The protein belongs to the globin family.

This is Globin CTT-Z (CTT-Z) from Chironomus thummi thummi (Midge).